Reading from the N-terminus, the 528-residue chain is Lysine--tRNA ligase (528 aa).

Residues 44–52 (PSGLPHIGT) carry the 'HIGH' region motif. The short motif at 290 to 294 (KISKS) is the 'KMSKS' region element. Lys293 is an ATP binding site.

This sequence belongs to the class-I aminoacyl-tRNA synthetase family.

The protein resides in the cytoplasm. The catalysed reaction is tRNA(Lys) + L-lysine + ATP = L-lysyl-tRNA(Lys) + AMP + diphosphate. The sequence is that of Lysine--tRNA ligase (lysS) from Rickettsia prowazekii (strain Madrid E).